Here is a 315-residue protein sequence, read N- to C-terminus: WD repeat domain-containing protein 83 (315 aa).

WD repeat units lie at residues 23-62 (CGQG…LLRT), 65-104 (GHGY…VVRK), 107-146 (GHAG…PEPV), 151-188 (EARD…VTSD), 190-228 (VGSP…LLGE), 231-272 (GHKN…LALA), and 275-313 (VGSN…AEGG).

This sequence belongs to the WD repeat MORG1 family. Interacts with EGLN3/PHD3. Interacts with ERK signaling proteins MAP2K1/MEK1, MAP2K2/MEK2, LAMTOR3, ARAF/Raf-1, MAPK1/ERK2 and MAPK3/ERK1. Identified in the spliceosome C complex. Interacts with PARD6B and CRB3. Interacts strongly with GTP-bound RRAGA but not with inactive GDP-bound. Interacts with p62/SQSTM1. Highly expressed in testis and brain. Expressed at intermediate level in heart, liver and kidney. Weakly expressed in spleen and lung and absent in muscle.

The protein resides in the cytoplasm. Its subcellular location is the lysosome. The protein localises to the nucleus. Molecular scaffold protein for various multimeric protein complexes. Acts as a module in the assembly of a multicomponent scaffold for the ERK pathway, linking ERK responses to specific agonists. At low concentrations it enhances ERK activation, whereas high concentrations lead to the inhibition of ERK activation. Also involved in response to hypoxia by acting as a negative regulator of HIF1A/HIF-1-alpha via its interaction with EGLN3/PHD3. May promote degradation of HIF1A. May act by recruiting signaling complexes to a specific upstream activator. May also be involved in pre-mRNA splicing. Participates in tight junction development by regulating apico-basal polarity, a key step in tissue development and organization. Mechanistically, regulates the translocation of PAR6-aPKC from the cytoplasm to the apical surface by acting as an adapter between PARD6B AND CRB3. Also acts as a negative regulator of mTORC1 under nutrient-rich conditions by binding to the active Rag GTPases to inhibit mTORC1 localization to the lysosome and phosphorylation of downstream targets. This facilitates constitutive basal autophagy during nutrient availability. This Rattus norvegicus (Rat) protein is WD repeat domain-containing protein 83 (Wdr83).